Here is an 879-residue protein sequence, read N- to C-terminus: Alanine--tRNA ligase (879 aa).

Zn(2+) is bound by residues H566, H570, C668, and H672.

The protein belongs to the class-II aminoacyl-tRNA synthetase family. Zn(2+) serves as cofactor.

It localises to the cytoplasm. It carries out the reaction tRNA(Ala) + L-alanine + ATP = L-alanyl-tRNA(Ala) + AMP + diphosphate. Catalyzes the attachment of alanine to tRNA(Ala) in a two-step reaction: alanine is first activated by ATP to form Ala-AMP and then transferred to the acceptor end of tRNA(Ala). Also edits incorrectly charged Ser-tRNA(Ala) and Gly-tRNA(Ala) via its editing domain. In Clostridium perfringens (strain 13 / Type A), this protein is Alanine--tRNA ligase.